Here is a 175-residue protein sequence, read N- to C-terminus: Adenine phosphoribosyltransferase (175 aa).

This sequence belongs to the purine/pyrimidine phosphoribosyltransferase family. As to quaternary structure, homodimer.

It is found in the cytoplasm. The enzyme catalyses AMP + diphosphate = 5-phospho-alpha-D-ribose 1-diphosphate + adenine. Its pathway is purine metabolism; AMP biosynthesis via salvage pathway; AMP from adenine: step 1/1. Functionally, catalyzes a salvage reaction resulting in the formation of AMP, that is energically less costly than de novo synthesis. The sequence is that of Adenine phosphoribosyltransferase from Lactobacillus johnsonii (strain CNCM I-12250 / La1 / NCC 533).